We begin with the raw amino-acid sequence, 275 residues long: Shikimate dehydrogenase (NADP(+)) (275 aa).

Residues 19 to 21 and T66 contribute to the shikimate site; that span reads SIS. K70 (proton acceptor) is an active-site residue. E82 is an NADP(+) binding site. Positions 91 and 106 each coordinate shikimate. NADP(+) contacts are provided by residues 129 to 133, 153 to 158, and I219; these read GAGGA and NRTYER. A shikimate-binding site is contributed by Y221. G242 contributes to the NADP(+) binding site.

It belongs to the shikimate dehydrogenase family. Homodimer.

It carries out the reaction shikimate + NADP(+) = 3-dehydroshikimate + NADPH + H(+). It participates in metabolic intermediate biosynthesis; chorismate biosynthesis; chorismate from D-erythrose 4-phosphate and phosphoenolpyruvate: step 4/7. In terms of biological role, involved in the biosynthesis of the chorismate, which leads to the biosynthesis of aromatic amino acids. Catalyzes the reversible NADPH linked reduction of 3-dehydroshikimate (DHSA) to yield shikimate (SA). The chain is Shikimate dehydrogenase (NADP(+)) from Dictyoglomus turgidum (strain DSM 6724 / Z-1310).